The sequence spans 197 residues: Recombination protein RecR (197 aa).

Residues 57 to 72 (CSVCFGITEEDPCRLC) form a C4-type zinc finger. The 96-residue stretch at 79–174 (TSLCVVEEPQ…RVTRLAHGIP (96 aa)) folds into the Toprim domain.

Belongs to the RecR family.

Functionally, may play a role in DNA repair. It seems to be involved in an RecBC-independent recombinational process of DNA repair. It may act with RecF and RecO. The protein is Recombination protein RecR of Geobacter metallireducens (strain ATCC 53774 / DSM 7210 / GS-15).